A 162-amino-acid chain; its full sequence is MAGTIEVLVPGGEANPGPPLGPELGPTPVDVQAVVQEINDQTAAFDGTEVPVTVKYDDDGSFEIEVGVPPTAELIKDEAGFETGSGEPQEDFVADLSVDQVKQIAEQKHPDLLSYDLTNAAKEVVGTCTSLGVTIEGENPREFKERIDAGEYDDVFAAEAQA.

Positions 1–27 (MAGTIEVLVPGGEANPGPPLGPELGPT) are disordered.

This sequence belongs to the universal ribosomal protein uL11 family. In terms of assembly, part of the 50S ribosomal subunit. Forms part of the ribosomal stalk which helps the ribosome interact with GTP-bound translation factors. Forms a heptameric L10(L12)2(L12)2(L12)2 complex, where L10 forms an elongated spine to which 3 L12 dimers bind in a sequential fashion.

Forms part of the ribosomal stalk which helps the ribosome interact with GTP-bound translation factors. This is Large ribosomal subunit protein uL11 from Haloarcula marismortui (strain ATCC 43049 / DSM 3752 / JCM 8966 / VKM B-1809) (Halobacterium marismortui).